Here is a 365-residue protein sequence, read N- to C-terminus: 3-isopropylmalate dehydrogenase (365 aa).

Substrate is bound by residues arginine 96, arginine 106, arginine 134, and aspartate 224. Residues aspartate 224, aspartate 248, and aspartate 252 each coordinate Mg(2+). NAD(+) is bound at residue 288 to 300; the sequence is GSAPTIAKQNIAN.

Belongs to the isocitrate and isopropylmalate dehydrogenases family. LeuB type 1 subfamily. In terms of assembly, homodimer. Mg(2+) serves as cofactor. The cofactor is Mn(2+).

The protein localises to the cytoplasm. The catalysed reaction is (2R,3S)-3-isopropylmalate + NAD(+) = 4-methyl-2-oxopentanoate + CO2 + NADH. It participates in amino-acid biosynthesis; L-leucine biosynthesis; L-leucine from 3-methyl-2-oxobutanoate: step 3/4. Functionally, catalyzes the oxidation of 3-carboxy-2-hydroxy-4-methylpentanoate (3-isopropylmalate) to 3-carboxy-4-methyl-2-oxopentanoate. The product decarboxylates to 4-methyl-2 oxopentanoate. In Dehalococcoides mccartyi (strain CBDB1), this protein is 3-isopropylmalate dehydrogenase.